The chain runs to 1006 residues: Zinc finger protein ZFPM1 (1006 aa).

The segment covering 1-13 (MSRRKQSNPRQIK) has biased composition (basic residues). Disordered stretches follow at residues 1-93 (MSRR…DELE) and 114-133 (SWGP…RQAE). The span at 15–25 (SLGDMEAREEV) shows a compositional bias: basic and acidic residues. Positions 42-62 (APSPPSADVNSPPPLPPPTSP) are enriched in pro residues. Positions 66-79 (KELEGQEPEPRPTE) are enriched in basic and acidic residues. Phosphoserine occurs at positions 84 and 128. Positions 121–130 (SVQTRASSPR) are enriched in polar residues. Residues 235-268 (VINKDVFPCKDCGIWYRSERNLQAHLLYYCASRQ) form a CCHC FOG-type 1 zinc finger. 4 residues coordinate Zn(2+): Cys-243, Cys-246, His-259, and Cys-264. Ser-272 is modified (phosphoserine). 3 C2H2-type zinc fingers span residues 290–314 (RVCP…MRSH), 320–342 (FVCL…LKVH), and 348–371 (GVCH…VTNH). An interaction with TACC3 region spans residues 330-341 (TTKANCERHLKV). Ser-384 carries the phosphoserine modification. 3 disordered regions span residues 384–409 (SPGA…HTAL), 438–460 (NGEA…AAPR), and 473–515 (APIL…SPVP). Low complexity predominate over residues 485-515 (APSRTPSPRSPAPARVKAELSSPTPGSSPVP). Residues Ser-491 and Ser-494 each carry the phosphoserine modification. Residues 571-604 (PGAPKGATCFECEITFSNVNNYYVHKRLYCSGRR) form a CCHC FOG-type 2 zinc finger. Zn(2+) contacts are provided by Cys-579, Cys-582, His-595, and Cys-600. The segment at 605–681 (APEDAPAARR…SVDDAEDDPS (77 aa)) is disordered. A compositionally biased stretch (pro residues) spans 617–629 (APPGPARAPPGQP). Residues Ser-638 and Ser-671 each carry the phosphoserine modification. The CCHC FOG-type 3 zinc-finger motif lies at 677 to 710 (EDDPSRTLCEACNIRFSRHETYTVHKRYYCASRH). Zn(2+) contacts are provided by Cys-685, Cys-688, His-701, and Cys-706. The disordered stretch occupies residues 708–810 (SRHDPPPRRP…PRRPLPGAPA (103 aa)). Pro residues-rich tracts occupy residues 715–735 (RRPA…PSPA) and 754–769 (APPP…PESP). A compositionally biased stretch (low complexity) spans 780–791 (GLAPARSPGPAA). A Phosphoserine modification is found at Ser-786. Positions 794–800 (PIDLSKK) are interaction with CTBP2. A CCHC FOG-type 4 zinc finger spans residues 811–844 (PALADYHECTACRVSFHSLEAYLAHKKYSCPAAP). Cys-819, Cys-822, His-835, and Cys-840 together coordinate Zn(2+). The C2H2-type 4 zinc-finger motif lies at 854 to 877 (AACPYCPPNGPVRGDLLEHFRLAH). Residues 889 to 971 (GVEARTPADR…KGTPAPLPNG (83 aa)) form a disordered region. Phosphoserine occurs at positions 901, 909, 914, and 935. Residues 925 to 950 (PQEPPPGPPPSPAAAPEAVPPPPAPP) show a composition bias toward pro residues. The CCHC FOG-type 5 zinc finger occupies 968 to 1001 (LPNGNHRYCRLCNIKFSSLSTFIAHKKYYCSSHA). 4 residues coordinate Zn(2+): Cys-976, Cys-979, His-992, and Cys-997.

This sequence belongs to the FOG (Friend of GATA) family. Interacts with corepressor CTBP2; this interaction is however not essential for corepressor activity. Interacts with the N-terminal zinc-finger of GATA1, GATA2 and probably GATA3. In terms of tissue distribution, mainly expressed in hematopoietic tissues. Also expressed in adult cerebellum, stomach, lymph node, liver and pancreas. Expressed in fetal heart, liver and spleen.

The protein localises to the nucleus. Functionally, transcription regulator that plays an essential role in erythroid and megakaryocytic cell differentiation. Essential cofactor that acts via the formation of a heterodimer with transcription factors of the GATA family GATA1, GATA2 and GATA3. Such heterodimer can both activate or repress transcriptional activity, depending on the cell and promoter context. The heterodimer formed with GATA proteins is essential to activate expression of genes such as NFE2, ITGA2B, alpha- and beta-globin, while it represses expression of KLF1. May be involved in regulation of some genes in gonads. May also be involved in cardiac development, in a non-redundant way with ZFPM2/FOG2. The protein is Zinc finger protein ZFPM1 (ZFPM1) of Homo sapiens (Human).